Here is a 619-residue protein sequence, read N- to C-terminus: Chaperone protein HscA homolog (619 aa).

Belongs to the heat shock protein 70 family.

In terms of biological role, chaperone involved in the maturation of iron-sulfur cluster-containing proteins. Has a low intrinsic ATPase activity which is markedly stimulated by HscB. This Shewanella frigidimarina (strain NCIMB 400) protein is Chaperone protein HscA homolog.